The following is a 338-amino-acid chain: 1-aminocyclopropane-1-carboxylate deaminase (338 aa).

Residue Lys-51 is modified to N6-(pyridoxal phosphate)lysine. Ser-78 serves as the catalytic Nucleophile.

This sequence belongs to the ACC deaminase/D-cysteine desulfhydrase family. In terms of assembly, homotrimer. Pyridoxal 5'-phosphate is required as a cofactor.

The catalysed reaction is 1-aminocyclopropane-1-carboxylate + H2O = 2-oxobutanoate + NH4(+). Functionally, catalyzes a cyclopropane ring-opening reaction, the irreversible conversion of 1-aminocyclopropane-1-carboxylate (ACC) to ammonia and alpha-ketobutyrate. Allows growth on ACC as a nitrogen source. This chain is 1-aminocyclopropane-1-carboxylate deaminase, found in Ralstonia nicotianae (strain ATCC BAA-1114 / GMI1000) (Ralstonia solanacearum).